Here is a 1945-residue protein sequence, read N- to C-terminus: Rho GTPase-activating protein 21 (1945 aa).

The interval 26-53 (CEVSKNKDGKDQGEPVSPSEDEPFSWPG) is disordered. Residues 29 to 38 (SKNKDGKDQG) show a composition bias toward basic and acidic residues. Phosphoserine occurs at positions 42 and 63. The region spanning 56–165 (TVMLKRTSQG…TLELSVMPKD (110 aa)) is the PDZ domain. Disordered stretches follow at residues 210-229 (TAQPVETCPPDSLPNKQQTS) and 326-365 (HQTTGSRSLEPSGILLKSGNYSGHSEGISSSRSQAVDSPP). The segment covering 347 to 358 (SGHSEGISSSRS) has biased composition (low complexity). Position 454 is a phosphoserine (S454). Residues 499–512 (EATATVNSESQIPD) show a composition bias toward polar residues. The segment at 499–519 (EATATVNSESQIPDSNGERKQ) is disordered. Residues R549 and R569 each carry the omega-N-methylarginine modification. Disordered stretches follow at residues 573-647 (PVSQ…RPVN) and 674-702 (EVSSCLPGTSAKTSPQLSENLGTSDLELP). A compositionally biased stretch (polar residues) spans 589 to 600 (SNRNFPTTTGVS). Phosphoserine occurs at positions 610 and 619. A compositionally biased stretch (polar residues) spans 674 to 696 (EVSSCLPGTSAKTSPQLSENLGT). T741 carries the post-translational modification Phosphothreonine. 3 positions are modified to phosphoserine: S851, S856, and S875. Disordered regions lie at residues 852-879 (HDQESVGPPSLDGQHSSKTERSKSYDEG) and 902-921 (ITDSQKSSEDSGSRKGSSSE). The span at 866-879 (HSSKTERSKSYDEG) shows a compositional bias: basic and acidic residues. Position 876 is a phosphotyrosine (Y876). Phosphoserine occurs at positions 918, 920, 948, 1093, and 1109. The tract at residues 924 to 1091 (SDAAREGWLQ…AKSEPKTQSP (168 aa)) is interaction with ARF1 and ARF6. Positions 925–1034 (DAAREGWLQF…WIKTIQESSN (110 aa)) constitute a PH domain. Residues 1080 to 1120 (LGAKSEPKTQSPHSPKEESERKLLSKDDTSPPKDKGTWRRG) are disordered. The span at 1093–1116 (SPKEESERKLLSKDDTSPPKDKGT) shows a compositional bias: basic and acidic residues. In terms of domain architecture, Rho-GAP spans 1141–1333 (VRLDDCPPAH…TLIQHHDWFF (193 aa)). Disordered stretches follow at residues 1373–1396 (PGDVSDSATSDSAKSKGSWGSGKD), 1412–1632 (SRKR…PVFP), 1649–1794 (ARVS…LGGH), and 1846–1945 (RTSA…ETPP). The segment covering 1377–1395 (SDSATSDSAKSKGSWGSGK) has biased composition (low complexity). 3 positions are modified to phosphoserine: S1412, S1426, and S1427. Basic and acidic residues-rich tracts occupy residues 1435-1457 (FFKKENTEQSHSEIKEESKRESE) and 1471-1488 (SNTKKDSGTTKEEKKIPW). A Glycyl lysine isopeptide (Lys-Gly) (interchain with G-Cter in SUMO) cross-link involves residue K1438. At T1504 the chain carries Phosphothreonine. Composition is skewed to low complexity over residues 1531 to 1556 (SDSGTLLSTSSQASLLRSSTKKSTSP) and 1569 to 1589 (TTTSDYSTTSSTTYLTSLDSS). The interaction with CTNNA1 stretch occupies residues 1579–1848 (STTYLTSLDS…WLARERVRTS (270 aa)). Residues 1590 to 1599 (RLSPEVQSVA) show a composition bias toward polar residues. Over residues 1611–1621 (SELVSEGRPVE) the composition is skewed to basic and acidic residues. S1656 is subject to Phosphoserine. Polar residues-rich tracts occupy residues 1658–1681 (GSEASCTEGSLTPSLDSRRQQFSS) and 1729–1738 (STGSLLTPSR). At T1669 the chain carries Phosphothreonine. A Phosphoserine modification is found at S1729. Residues 1739 to 1757 (SESEKQEATWKTKIADRLK) show a composition bias toward basic and acidic residues. Residues 1782–1792 (RKNIKRRHTLG) show a composition bias toward basic residues. Positions 1871–1882 (PISTHSPPSQQP) are enriched in polar residues. A compositionally biased stretch (low complexity) spans 1887-1896 (AATSTLASTS). T1902 is subject to Phosphothreonine. Residue S1906 is modified to Phosphoserine. The span at 1907-1927 (PDQINRESFQNMSQNASSTAN) shows a compositional bias: polar residues. Residues 1932-1945 (KQSESPDTKAETPP) are compositionally biased toward basic and acidic residues.

Interacts with CTNNA1. Interacts with GTP-bound ARF1 and probably ARF6. Sumoylated with SUMO2 and SUMO3 in proliferating lymphocytes.

It localises to the golgi apparatus membrane. The protein localises to the cell junction. Its subcellular location is the cytoplasmic vesicle membrane. It is found in the cytoplasm. The protein resides in the cytoskeleton. In terms of biological role, functions as a GTPase-activating protein (GAP) for RHOA and CDC42. Downstream partner of ARF1 which may control Golgi apparatus structure and function. Also required for CTNNA1 recruitment to adherens junctions. The polypeptide is Rho GTPase-activating protein 21 (Mus musculus (Mouse)).